The chain runs to 273 residues: Exosome complex component Rrp42 (273 aa).

It belongs to the RNase PH family. Rrp42 subfamily. In terms of assembly, component of the archaeal exosome complex. Forms a hexameric ring-like arrangement composed of 3 Rrp41-Rrp42 heterodimers. The hexameric ring associates with a trimer of Rrp4 and/or Csl4 subunits.

The protein resides in the cytoplasm. Non-catalytic component of the exosome, which is a complex involved in RNA degradation. Contributes to the structuring of the Rrp41 active site. The protein is Exosome complex component Rrp42 of Thermococcus gammatolerans (strain DSM 15229 / JCM 11827 / EJ3).